The following is a 246-amino-acid chain: Small ribosomal subunit protein uS2 (246 aa).

The protein belongs to the universal ribosomal protein uS2 family. Component of the small ribosomal subunit. Mature ribosomes consist of a small (40S) and a large (60S) subunit. The 40S subunit contains about 33 different proteins and 1 molecule of RNA (18S). The 60S subunit contains about 49 different proteins and 3 molecules of RNA (25S, 5.8S and 5S). Interacts with ribosomal protein S21.

The protein localises to the cytoplasm. Required for the assembly and/or stability of the 40S ribosomal subunit. Required for the processing of the 20S rRNA-precursor to mature 18S rRNA in a late step of the maturation of 40S ribosomal subunits. The polypeptide is Small ribosomal subunit protein uS2 (Leishmania infantum).